A 117-amino-acid polypeptide reads, in one-letter code: Ig heavy chain V region 108A (117 aa).

Positions 1-19 (MGWSWIFLFLLSGTAGVHS) are cleaved as a signal peptide. The region spanning 20–117 (EVQLQQSGPE…EDSAVYYCAR (98 aa)) is the Ig-like domain.

The protein is Ig heavy chain V region 108A (Igh-VJ558) of Mus musculus (Mouse).